The sequence spans 415 residues: Homoserine O-succinyltransferase (415 aa).

In terms of domain architecture, AB hydrolase-1 spans 69 to 383 (NAVLVCHALN…PHGHDAFLLD (315 aa)). S175 serves as the catalytic Nucleophile. Residue R245 participates in substrate binding. Active-site residues include D344 and H377. Residue D378 participates in substrate binding.

Belongs to the AB hydrolase superfamily. MetX family. In terms of assembly, homodimer.

The protein resides in the cytoplasm. The enzyme catalyses L-homoserine + succinyl-CoA = O-succinyl-L-homoserine + CoA. It functions in the pathway amino-acid biosynthesis; L-methionine biosynthesis via de novo pathway; O-succinyl-L-homoserine from L-homoserine: step 1/1. Transfers a succinyl group from succinyl-CoA to L-homoserine, forming succinyl-L-homoserine. In Bordetella parapertussis (strain 12822 / ATCC BAA-587 / NCTC 13253), this protein is Homoserine O-succinyltransferase.